The chain runs to 275 residues: MTRKVAIYGKGGIGKSTTTQNTAAALAYFHDKKVFTHGCDPKADSTRLILGGKPEETLMDMVRDKGAEKITNDDVIKKGFLDIQCVESGGPEPGVGCAGRGVITAIDLMEENGAYTDDLDFVFFDDLGDVVCGGFAMPIRDGKAQEVYIVASGEMMAIYAANNICKGLVKYAKQSAVGLGGIICNSRKVDGERESVEEFTAAIGTKMIHFVPRDNIVQKAEFNKKTVTEFAPEENQAKEYGELARKIIENDEFVIPKPLTMDQLEDMVVKYGIAD.

Gly9 to Ser16 contacts ATP. Cys97 is a binding site for [4Fe-4S] cluster. Arg100 carries the post-translational modification ADP-ribosylarginine; by dinitrogenase reductase ADP-ribosyltransferase. Position 132 (Cys132) interacts with [4Fe-4S] cluster.

This sequence belongs to the NifH/BchL/ChlL family. As to quaternary structure, homodimer. [4Fe-4S] cluster is required as a cofactor. The reversible ADP-ribosylation of Arg-100 inactivates the nitrogenase reductase and regulates nitrogenase activity.

The catalysed reaction is N2 + 8 reduced [2Fe-2S]-[ferredoxin] + 16 ATP + 16 H2O = H2 + 8 oxidized [2Fe-2S]-[ferredoxin] + 2 NH4(+) + 16 ADP + 16 phosphate + 6 H(+). In terms of biological role, the key enzymatic reactions in nitrogen fixation are catalyzed by the nitrogenase complex, which has 2 components: the iron protein (component 2) and a component 1 which is either a molybdenum-iron protein, a vanadium-iron, or an iron-iron protein. The protein is Nitrogenase iron protein 3 (anfH) of Azotobacter vinelandii.